The chain runs to 448 residues: Histidinol dehydrogenase (448 aa).

The NAD(+) site is built by tyrosine 136, glutamine 197, and asparagine 220. Residues serine 243, glutamine 265, and histidine 268 each contribute to the substrate site. Zn(2+)-binding residues include glutamine 265 and histidine 268. Catalysis depends on proton acceptor residues glutamate 333 and histidine 334. Positions 334, 367, 421, and 426 each coordinate substrate. Aspartate 367 lines the Zn(2+) pocket. Residue histidine 426 participates in Zn(2+) binding.

Belongs to the histidinol dehydrogenase family. It depends on Zn(2+) as a cofactor.

The enzyme catalyses L-histidinol + 2 NAD(+) + H2O = L-histidine + 2 NADH + 3 H(+). It functions in the pathway amino-acid biosynthesis; L-histidine biosynthesis; L-histidine from 5-phospho-alpha-D-ribose 1-diphosphate: step 9/9. Functionally, catalyzes the sequential NAD-dependent oxidations of L-histidinol to L-histidinaldehyde and then to L-histidine. This Pseudomonas syringae pv. syringae (strain B728a) protein is Histidinol dehydrogenase.